The chain runs to 219 residues: Ras-related protein Rab-32A (219 aa).

A GTP-binding site is contributed by 22–29 (GDIGTGKT). The Effector region signature appears at 44–52 (YKSTIGVDF). Residues 71-75 (DIAGQ) and 134-137 (NKCD) contribute to the GTP site. The interval 192–219 (NQPIEGTIQPGDLNKQPQPTSTGPSCCK) is disordered. A compositionally biased stretch (polar residues) spans 206–219 (KQPQPTSTGPSCCK). Residues C217 and C218 are each lipidated (S-geranylgeranyl cysteine).

Belongs to the small GTPase superfamily. Rab family.

In Dictyostelium discoideum (Social amoeba), this protein is Ras-related protein Rab-32A (rab32A).